Consider the following 202-residue polypeptide: Small ribosomal subunit protein uS4c (202 aa).

An S4 RNA-binding domain is found at 90-152 (MRLDNVIFRL…RKSESIINKN (63 aa)).

The protein belongs to the universal ribosomal protein uS4 family. As to quaternary structure, part of the 30S ribosomal subunit. Contacts protein S5. The interaction surface between S4 and S5 is involved in control of translational fidelity.

It localises to the plastid. The protein localises to the chloroplast. In terms of biological role, one of the primary rRNA binding proteins, it binds directly to 16S rRNA where it nucleates assembly of the body of the 30S subunit. Its function is as follows. With S5 and S12 plays an important role in translational accuracy. In Dendrohypopterygium filiculiforme (Moss), this protein is Small ribosomal subunit protein uS4c (rps4).